We begin with the raw amino-acid sequence, 671 residues long: DNA ligase (671 aa).

NAD(+) contacts are provided by residues 32-36 (DVEYD), 81-82 (SL), and Glu114. Catalysis depends on Lys116, which acts as the N6-AMP-lysine intermediate. 4 residues coordinate NAD(+): Arg137, Glu175, Lys292, and Lys316. Zn(2+) contacts are provided by Cys410, Cys413, Cys428, and Cys434. Residues 592–671 (EKNNYFSGKN…AEFYQILGIR (80 aa)) form the BRCT domain.

This sequence belongs to the NAD-dependent DNA ligase family. LigA subfamily. Mg(2+) serves as cofactor. The cofactor is Mn(2+).

It carries out the reaction NAD(+) + (deoxyribonucleotide)n-3'-hydroxyl + 5'-phospho-(deoxyribonucleotide)m = (deoxyribonucleotide)n+m + AMP + beta-nicotinamide D-nucleotide.. Its function is as follows. DNA ligase that catalyzes the formation of phosphodiester linkages between 5'-phosphoryl and 3'-hydroxyl groups in double-stranded DNA using NAD as a coenzyme and as the energy source for the reaction. It is essential for DNA replication and repair of damaged DNA. The sequence is that of DNA ligase from Baumannia cicadellinicola subsp. Homalodisca coagulata.